A 793-amino-acid polypeptide reads, in one-letter code: von Willebrand factor A domain-containing protein 5A (793 aa).

A VIT domain is found at 1–131; that stretch reads MEHHCGLITS…KVAVTLRYVQ (131 aa). The region spanning 281-469 is the VWFA domain; that stretch reads EFVFLMDRSG…FALQCAVDNI (189 aa). A Phosphotyrosine modification is found at Tyr-622.

In terms of biological role, may play a role in tumorigenesis as a tumor suppressor. Altered expression of this protein and disruption of the molecular pathway it is involved in may contribute directly to or modify tumorigenesis. In Mus musculus (Mouse), this protein is von Willebrand factor A domain-containing protein 5A (Vwa5a).